We begin with the raw amino-acid sequence, 428 residues long: Mitochondrial import inner membrane translocase subunit TIM50-C (428 aa).

The helical transmembrane segment at 59 to 79 (LFTCTALPAAAPALFSILHTA) threads the bilayer. At 80 to 428 (RGYSSTTKQE…KQWSRNILGR (349 aa)) the chain is on the mitochondrial intermembrane side. The tract at residues 112–138 (FPQTSPEVDSNAEQERKKREEEEEKEN) is disordered. Basic and acidic residues predominate over residues 124–138 (EQERKKREEEEEKEN). The FCP1 homology domain occupies 224-367 (YVQPRYTLVL…LDLIAFLKII (144 aa)).

It belongs to the TIM50 family. In terms of assembly, component of the TIM23 complex at least composed of Tim23, Tim17 (Tim17a1, Tim17a2 or Tim17b1) and a Tim50.

The protein resides in the mitochondrion inner membrane. Essential component of the TIM23 complex, a complex that mediates the translocation of transit peptide-containing proteins across the mitochondrial inner membrane. The protein is Mitochondrial import inner membrane translocase subunit TIM50-C (ttm50) of Drosophila melanogaster (Fruit fly).